The chain runs to 244 residues: tRNA pseudouridine synthase A 2 (244 aa).

Asp52 functions as the Nucleophile in the catalytic mechanism. Tyr110 serves as a coordination point for substrate.

The protein belongs to the tRNA pseudouridine synthase TruA family. Homodimer.

It carries out the reaction uridine(38/39/40) in tRNA = pseudouridine(38/39/40) in tRNA. Its function is as follows. Formation of pseudouridine at positions 38, 39 and 40 in the anticodon stem and loop of transfer RNAs. This is tRNA pseudouridine synthase A 2 from Clostridium perfringens (strain 13 / Type A).